The sequence spans 1047 residues: FACT complex subunit SPT16 (1047 aa).

N-acetylalanine is present on A2. N6-acetyllysine is present on K139. Phosphoserine is present on S188. N6-acetyllysine occurs at positions 196 and 223. The stretch at 432–507 (LKNEDEEEEE…GEQQIQKARK (76 aa)) forms a coiled coil. Phosphoserine is present on S455. Positions 492–518 (RLTEQKGEQQIQKARKSNVSYKNPSLM) are disordered. K497 is covalently cross-linked (Glycyl lysine isopeptide (Lys-Gly) (interchain with G-Cter in SUMO2)). Polar residues predominate over residues 499–514 (EQQIQKARKSNVSYKN). Phosphoserine is present on S508. Residue K513 is modified to N6-acetyllysine; alternate. K513 is covalently cross-linked (Glycyl lysine isopeptide (Lys-Gly) (interchain with G-Cter in SUMO2); alternate). K647 participates in a covalent cross-link: Glycyl lysine isopeptide (Lys-Gly) (interchain with G-Cter in SUMO2). Residues S650 and S658 each carry the phosphoserine modification. Residues K732 and K786 each carry the N6-acetyllysine modification. Position 903 is a phosphothreonine (T903). K904 carries the N6-acetyllysine modification. Residues 918–1047 (EQGGWSFLEP…SSAPPKKKRK (130 aa)) form a disordered region. A compositionally biased stretch (acidic residues) spans 927–973 (PEGEGSDAEEGDSESEIEDETFNPSEDDYEEEEEDSDEDYSSEAEES). Residues S979, S982, S986, and S1015 each carry the phosphoserine modification. Over residues 985–1005 (ESGKDWDELEEEARKADRESR) the composition is skewed to basic and acidic residues. The segment covering 1024–1039 (VHSSGRGSNRGSRHSS) has biased composition (low complexity).

It belongs to the peptidase M24 family. SPT16 subfamily. Interacts with MYOG (via C-terminal region). Component of the FACT complex, a stable heterodimer of SSRP1 and SUPT16H. Also a component of a CK2-SPT16-SSRP1 complex which forms following UV irradiation, composed of SSRP1, SUPT16H, CSNK2A1, CSNK2A2 and CSNK2B. Interacts with NEK9. Binds to histone H2A-H2B. Identified in a centromere complex containing histones H2A, H2B and H4, and at least CENPA, CENPB, CENPC, CENPT, CENPN, HJURP, SUPT16H, SSRP1 and RSF1. Interacts with GTF2E2. In terms of assembly, (Microbial infection) Interacts with Herpes simplex virus 1 (HHV-1) protein ICP22; this interaction relocalizes the FACT complex to viral genomes in infected cells. Post-translationally, ADP-ribosylated. ADP-ribosylation by PARP1 is induced by genotoxic stress and correlates with dissociation of FACT from chromatin. Ubiquitous.

The protein resides in the nucleus. It is found in the chromosome. In terms of biological role, component of the FACT complex, a general chromatin factor that acts to reorganize nucleosomes. The FACT complex is involved in multiple processes that require DNA as a template such as mRNA elongation, DNA replication and DNA repair. During transcription elongation the FACT complex acts as a histone chaperone that both destabilizes and restores nucleosomal structure. It facilitates the passage of RNA polymerase II and transcription by promoting the dissociation of one histone H2A-H2B dimer from the nucleosome, then subsequently promotes the reestablishment of the nucleosome following the passage of RNA polymerase II. The FACT complex is probably also involved in phosphorylation of 'Ser-392' of p53/TP53 via its association with CK2 (casein kinase II). This is FACT complex subunit SPT16 (SUPT16H) from Homo sapiens (Human).